The sequence spans 94 residues: Pyrimidine/purine nucleoside phosphorylase (94 aa).

The protein belongs to the nucleoside phosphorylase PpnP family.

The catalysed reaction is a purine D-ribonucleoside + phosphate = a purine nucleobase + alpha-D-ribose 1-phosphate. It carries out the reaction adenosine + phosphate = alpha-D-ribose 1-phosphate + adenine. It catalyses the reaction cytidine + phosphate = cytosine + alpha-D-ribose 1-phosphate. The enzyme catalyses guanosine + phosphate = alpha-D-ribose 1-phosphate + guanine. The catalysed reaction is inosine + phosphate = alpha-D-ribose 1-phosphate + hypoxanthine. It carries out the reaction thymidine + phosphate = 2-deoxy-alpha-D-ribose 1-phosphate + thymine. It catalyses the reaction uridine + phosphate = alpha-D-ribose 1-phosphate + uracil. The enzyme catalyses xanthosine + phosphate = alpha-D-ribose 1-phosphate + xanthine. Catalyzes the phosphorolysis of diverse nucleosides, yielding D-ribose 1-phosphate and the respective free bases. Can use uridine, adenosine, guanosine, cytidine, thymidine, inosine and xanthosine as substrates. Also catalyzes the reverse reactions. The protein is Pyrimidine/purine nucleoside phosphorylase of Pseudomonas fluorescens (strain Pf0-1).